A 265-amino-acid polypeptide reads, in one-letter code: Glutamate racemase (265 aa).

Substrate-binding positions include aspartate 10–serine 11 and tyrosine 42–glycine 43. Cysteine 73 functions as the Proton donor/acceptor in the catalytic mechanism. Substrate is bound at residue asparagine 74–threonine 75. Cysteine 184 (proton donor/acceptor) is an active-site residue. Position 185–186 (threonine 185–histidine 186) interacts with substrate.

The protein belongs to the aspartate/glutamate racemases family.

It carries out the reaction L-glutamate = D-glutamate. The protein operates within cell wall biogenesis; peptidoglycan biosynthesis. Functionally, provides the (R)-glutamate required for cell wall biosynthesis. In Pediococcus pentosaceus (strain ATCC 25745 / CCUG 21536 / LMG 10740 / 183-1w), this protein is Glutamate racemase.